The sequence spans 834 residues: DNA polymerase I, thermostable (834 aa).

One can recognise a 5'-3' exonuclease domain in the interval 176–262 (KPEQWVDFRA…DLPLEVDLAQ (87 aa)). The tract at residues 412–834 (ERLHRNLLKR…MGEDWLSAKG (423 aa)) is polymerase.

This sequence belongs to the DNA polymerase type-A family.

The catalysed reaction is DNA(n) + a 2'-deoxyribonucleoside 5'-triphosphate = DNA(n+1) + diphosphate. Has 5'-3' exonuclease activity and no 3'-5' exonuclease activity. The chain is DNA polymerase I, thermostable (polA) from Thermus caldophilus.